The primary structure comprises 537 residues: Hydroxylamine reductase (537 aa).

[4Fe-4S] cluster is bound by residues C3, C6, C15, and C21. H239, E263, C307, C393, C421, C446, E480, and K482 together coordinate hybrid [4Fe-2O-2S] cluster. C393 is subject to Cysteine persulfide.

Belongs to the HCP family. [4Fe-4S] cluster serves as cofactor. The cofactor is hybrid [4Fe-2O-2S] cluster.

The protein resides in the cytoplasm. It catalyses the reaction A + NH4(+) + H2O = hydroxylamine + AH2 + H(+). Its function is as follows. Catalyzes the reduction of hydroxylamine to form NH(3) and H(2)O. This chain is Hydroxylamine reductase, found in Lawsonia intracellularis (strain PHE/MN1-00).